Reading from the N-terminus, the 470-residue chain is MENLQVKALPKEFLLGTATAAYQVEGATRVDGKGINMWDVYLQENSPFLPDPASDFYYRYEEDIALAAEHGLQALRLSISWVRIFPDIDGDANVLAVHYYHRVFQSCLKHNVIPFVSLHHFDSPQKMLETGDWLNRENIDRFIRYARFCFQEFTEVKHWFTINELMSLAAGQYIGGQFPPNHHFQLSEAIQANHNMLLAHALAVLEFHQLGIEGKVGCIHALKPGYPIDGQKENILAAKRYDVYNNKFLLDGTFLGYYSEDTLFHLNQILEANNSSFIIEDGDLEIMKRAAPLNTMFVMNYYRSEFIREYKGENRQEFNSTGIKGQSSFKLNALGEFVKKPGIPTTDWDWNIYPQGLFDMLLRIKEEYPQHPVIYLTENGTALKEVKPEGENDIIDDSKRIRYIEQHLHKVLEARDRGVNIQGYFIWSLQDQFSWANGYNKRYGLFFVDYETQKRYIKKSALWVKGLKRN.

Positions 23, 120, 163, 164, and 300 each coordinate D-galactose 6-phosphate. Glu164 (proton donor) is an active-site residue. The Nucleophile role is filled by Glu378. Positions 434, 435, 441, and 443 each coordinate D-galactose 6-phosphate.

This sequence belongs to the glycosyl hydrolase 1 family.

It carries out the reaction a 6-phospho-beta-D-galactoside + H2O = D-galactose 6-phosphate + an alcohol. The protein operates within carbohydrate metabolism; lactose degradation; D-galactose 6-phosphate and beta-D-glucose from lactose 6-phosphate: step 1/1. This Streptococcus pneumoniae (strain ATCC BAA-255 / R6) protein is 6-phospho-beta-galactosidase 1.